We begin with the raw amino-acid sequence, 530 residues long: NAD(+) kinase (530 aa).

Disordered stretches follow at residues 1–27 (MKENDMNNGVDKWVNEEDGRNDHHNNN), 57–99 (ISSE…KSSN), and 486–530 (SLEA…RFSV). Residues 13 to 25 (WVNEEDGRNDHHN) are compositionally biased toward basic and acidic residues. The segment covering 59 to 75 (SESSSRRSSLLNKDSSL) has biased composition (low complexity). Residues 88–99 (INGTRGSSKSSN) show a composition bias toward polar residues. A phosphoserine mark is found at serine 499 and serine 503. The span at 499–508 (SDDESDDESV) shows a compositional bias: acidic residues.

This sequence belongs to the NAD kinase family. In terms of assembly, homohexamer.

It catalyses the reaction NAD(+) + ATP = ADP + NADP(+) + H(+). In terms of biological role, specifically phosphorylates NAD in the presence of ATP, dATP, or CTP as phosphoryl donors. The sequence is that of NAD(+) kinase (UTR1) from Saccharomyces cerevisiae (strain ATCC 204508 / S288c) (Baker's yeast).